Reading from the N-terminus, the 198-residue chain is UPF0548 protein DR_2035 (198 aa).

It belongs to the UPF0548 family.

This Deinococcus radiodurans (strain ATCC 13939 / DSM 20539 / JCM 16871 / CCUG 27074 / LMG 4051 / NBRC 15346 / NCIMB 9279 / VKM B-1422 / R1) protein is UPF0548 protein DR_2035.